Here is a 307-residue protein sequence, read N- to C-terminus: Ribosomal RNA small subunit methyltransferase H (307 aa).

S-adenosyl-L-methionine contacts are provided by residues 33–35 (GGH), D52, L83, D97, and Q104.

Belongs to the methyltransferase superfamily. RsmH family.

It localises to the cytoplasm. The catalysed reaction is cytidine(1402) in 16S rRNA + S-adenosyl-L-methionine = N(4)-methylcytidine(1402) in 16S rRNA + S-adenosyl-L-homocysteine + H(+). Specifically methylates the N4 position of cytidine in position 1402 (C1402) of 16S rRNA. This chain is Ribosomal RNA small subunit methyltransferase H, found in Campylobacter fetus subsp. fetus (strain 82-40).